Reading from the N-terminus, the 288-residue chain is Histone-lysine N-methyltransferase Suv4-20 (288 aa).

One can recognise an SET domain in the interval 128–238; it reads QECKRYSQEG…PGDEITCFYG (111 aa).

It belongs to the class V-like SAM-binding methyltransferase superfamily. Histone-lysine methyltransferase family. Suvar4-20 subfamily.

Its subcellular location is the nucleus. It localises to the chromosome. It carries out the reaction N(6)-methyl-L-lysyl(20)-[histone H4] + S-adenosyl-L-methionine = N(6),N(6)-dimethyl-L-lysyl(20)-[histone H4] + S-adenosyl-L-homocysteine + H(+). It catalyses the reaction N(6),N(6)-dimethyl-L-lysyl(20)-[histone H4] + S-adenosyl-L-methionine = N(6),N(6),N(6)-trimethyl-L-lysyl(20)-[histone H4] + S-adenosyl-L-homocysteine + H(+). Histone methyltransferase that specifically di- and trimethylates 'Lys-20' of histone H4 (H4K20me2/me3). H4 'Lys-20' trimethylation represents a specific tag for epigenetic transcriptional repression. Contributes to dosage compensation of X chromosome-relative to autosome-linked gene expression, possibly by converting H4K20me1 to H4K20m2/me3 on autosomes. Involved in the regulation of growth and body fat metabolism downstream of the TOR complex 2 pathway. The sequence is that of Histone-lysine N-methyltransferase Suv4-20 (set-4) from Caenorhabditis elegans.